The primary structure comprises 277 residues: Undecaprenyl-diphosphatase (277 aa).

6 helical membrane-spanning segments follow: residues 53–73 (LGAI…VILG), 85–105 (VNLL…ADLI), 108–128 (WLFN…VMLW), 183–203 (AATE…AAYS), 215–235 (GDLP…MLAV), and 250–270 (FAWY…LGVV).

This sequence belongs to the UppP family.

Its subcellular location is the cell inner membrane. It carries out the reaction di-trans,octa-cis-undecaprenyl diphosphate + H2O = di-trans,octa-cis-undecaprenyl phosphate + phosphate + H(+). Catalyzes the dephosphorylation of undecaprenyl diphosphate (UPP). Confers resistance to bacitracin. This Azotobacter vinelandii (strain DJ / ATCC BAA-1303) protein is Undecaprenyl-diphosphatase.